The following is a 208-amino-acid chain: Guanylate kinase (208 aa).

A Guanylate kinase-like domain is found at 4–185 (GNLYIISAPS…ALVDLEHILR (182 aa)). 11–18 (APSGAGKS) lines the ATP pocket.

This sequence belongs to the guanylate kinase family.

It is found in the cytoplasm. The catalysed reaction is GMP + ATP = GDP + ADP. Its function is as follows. Essential for recycling GMP and indirectly, cGMP. This Histophilus somni (strain 129Pt) (Haemophilus somnus) protein is Guanylate kinase.